Consider the following 155-residue polypeptide: Nascent polypeptide-associated complex subunit beta (155 aa).

2 disordered regions span residues 1–39 (MDQA…DDKK) and 122–155 (QNMQ…SKVE). Residues 21 to 31 (TPRRKTKKVHK) show a composition bias toward basic residues. The NAC-A/B domain maps to 34–99 (GTDDKKLQTS…GEEKELTELV (66 aa)). Over residues 125-135 (QKKEGEAKKEG) the composition is skewed to basic and acidic residues.

This sequence belongs to the NAC-beta family. In terms of assembly, part of the nascent polypeptide-associated complex (NAC), consisting of EGD2 and EGD1. NAC associates with ribosomes via EGD1.

It is found in the cytoplasm. The protein resides in the nucleus. Functionally, component of the nascent polypeptide-associated complex (NAC), a dynamic component of the ribosomal exit tunnel, protecting the emerging polypeptides from interaction with other cytoplasmic proteins to ensure appropriate nascent protein targeting. The NAC complex also promotes mitochondrial protein import by enhancing productive ribosome interactions with the outer mitochondrial membrane and blocks the inappropriate interaction of ribosomes translating non-secretory nascent polypeptides with translocation sites in the membrane of the endoplasmic reticulum. EGD1 may act as a transcription factor that exert a negative effect on the expression of several genes that are transcribed by RNA polymerase II. This is Nascent polypeptide-associated complex subunit beta (EGD1) from Coccidioides immitis (strain RS) (Valley fever fungus).